The following is a 682-amino-acid chain: Potassium-transporting ATPase ATP-binding subunit (682 aa).

The next 4 membrane-spanning stretches (helical) occupy residues 34–54 (PVMF…IAMA), 62–82 (ALFS…ANFA), 219–239 (IALT…TATL), and 254–274 (VLVA…LSAI). D307 serves as the catalytic 4-aspartylphosphate intermediate. ATP contacts are provided by residues D344, E348, 377–384 (FTAQSRMS), and K395. Positions 518 and 522 each coordinate Mg(2+). The next 3 membrane-spanning stretches (helical) occupy residues 588-608 (FAII…LNIM), 616-636 (AILS…PLAL), and 656-676 (IYGL…DLLL).

Belongs to the cation transport ATPase (P-type) (TC 3.A.3) family. Type IA subfamily. In terms of assembly, the system is composed of three essential subunits: KdpA, KdpB and KdpC.

Its subcellular location is the cell inner membrane. It carries out the reaction K(+)(out) + ATP + H2O = K(+)(in) + ADP + phosphate + H(+). In terms of biological role, part of the high-affinity ATP-driven potassium transport (or Kdp) system, which catalyzes the hydrolysis of ATP coupled with the electrogenic transport of potassium into the cytoplasm. This subunit is responsible for energy coupling to the transport system and for the release of the potassium ions to the cytoplasm. This chain is Potassium-transporting ATPase ATP-binding subunit, found in Escherichia fergusonii (strain ATCC 35469 / DSM 13698 / CCUG 18766 / IAM 14443 / JCM 21226 / LMG 7866 / NBRC 102419 / NCTC 12128 / CDC 0568-73).